Reading from the N-terminus, the 57-residue chain is Neurotoxin Oh9-1 (57 aa).

4 disulfide bridges follow: Cys3–Cys19, Cys12–Cys37, Cys41–Cys49, and Cys50–Cys55.

It belongs to the three-finger toxin family. Short-chain subfamily. Expressed by the venom gland.

The protein localises to the secreted. In terms of biological role, this toxin binds and inhibits rat muscle adult alpha-1-beta-1-delta-epsilon/CHRNA1-CHRNB1-CHRND-CHRNE (IC(50)=3.1 uM) and fetal alpha-1-beta-1-gamma-delta/CHRNA1-CHRNB1-CHRNG-CHRND (IC(50)=5.6 uM) nicotinic acetylcholine receptors (nAChR). Shows a very low inhibition on rat neuronal alpha-3-beta-2/CHRNA3-CHRNB2 nAChR (IC(50)=50.2 uM) nAChR. Binds to the acetylcholine-binding pocket and acts as a competitive antagonist. Does not inhibit human glycine receptor (homopentamer composed of alpha-1 subunits, GLRA1), but seems to potentiate it (about 2-fold increased activity). The sequence is that of Neurotoxin Oh9-1 from Ophiophagus hannah (King cobra).